Consider the following 222-residue polypeptide: Thiol:disulfide interchange protein DsbL (222 aa).

The signal sequence occupies residues Met1–Ala27. In terms of domain architecture, Thioredoxin spans Phe28–Thr221. Cys56 and Cys59 are disulfide-bonded.

It belongs to the thioredoxin family. DsbL subfamily. Interacts with DsbI.

It localises to the periplasm. In terms of biological role, involved in disulfide-bond formation. Acts by transferring its disulfide bond to other proteins. Part of a redox system composed of DsbI and DsbL that mediates formation of an essential disulfide bond in AssT. This chain is Thiol:disulfide interchange protein DsbL, found in Lelliottia amnigena (Enterobacter amnigenus).